The following is a 229-amino-acid chain: Matrix protein (229 aa).

Low complexity predominate over residues 1–10; that stretch reads MSSLKKILGL. The tract at residues 1–23 is disordered; that stretch reads MSSLKKILGLKGKGKKSKKLGIA. The short motif at 2–4 is the dynamin binding element; that stretch reads SSL. The PPXY motif signature appears at 24 to 27; sequence PPPY. Residues 37–40 carry the PTAP/PSAP motif motif; sequence PSAP.

It belongs to the vesiculoviruses matrix protein family. As to quaternary structure, homomultimer. Interacts with viral nucleocapsid; this interaction contributes to the virion assembly. Interacts with the viral envelope glycoprotein; this interaction contributes to the virion assembly. Interacts with host RAE1-NUP98 complex. Interacts with host NEDD4 and TSG101. Interacts with host dynamin. Interacts with host NDUFAF4; the interaction inhibits viral propagation and is independent of interferon activation. Interacts with host GTF2H5; the interaction may inhibit host transcription. Phosphorylated by host.

The protein localises to the virion. The protein resides in the host endomembrane system. It localises to the host nucleus membrane. Its subcellular location is the host nucleus. It is found in the host cytoplasm. Forms a double layer around the helical nucleocapsid, the inner matrix layer binding to the N helix and the outer matrix layer binding to the envelope glycoprotein. Plays a major role in assembly and budding of virion, by recruiting cellular partners of the ESCRT complexes that play a key role in releasing the budding particle from the host membrane. Condensates the ribonucleocapsid core during virus assembly. Inhibits the host mRNA nuclear export thereby inducing the shut off of cellular transcription and preventing the interferon signaling and the establishment of antiviral state in infected cells. This shutoff presumably inhibits interferon signaling and thus establishment of antiviral state in virus infected cells. Induces cell-rounding, cytoskeleton disorganization and apoptosis in infected cell. Inhibits host transcription, possibly through interaction with host DNA repair factor IIH/TFIIH GTF2H5 subunit. This Vesicular stomatitis Indiana virus (strain 85CLB South America) (VSIV) protein is Matrix protein (M).